The chain runs to 123 residues: Small ribosomal subunit protein uS12c (123 aa).

It belongs to the universal ribosomal protein uS12 family. As to quaternary structure, part of the 30S ribosomal subunit.

Its subcellular location is the plastid. The protein resides in the chloroplast. Functionally, with S4 and S5 plays an important role in translational accuracy. Located at the interface of the 30S and 50S subunits. This Chlorella vulgaris (Green alga) protein is Small ribosomal subunit protein uS12c (rps12).